Reading from the N-terminus, the 381-residue chain is E3 ubiquitin-protein ligase KCMF1 (381 aa).

Ser2 is subject to N-acetylserine. Ser2 carries the post-translational modification Phosphoserine. The ZZ-type zinc finger occupies 4–60; that stretch reads HEGVSCDACLKGNFRGRRYKCLICYDYDLCASCYESGATTTRHTTDHPMQCILTRVD. Zn(2+) is bound by residues Cys9, Cys12, Cys24, Cys27, Cys33, Cys36, His46, and His50. The C2H2-type zinc-finger motif lies at 78–101; it reads FTCPYCGKMGYTETSLQEHVTSEH. Residues 154–193 are disordered; the sequence is MFHPGRGLGGPRARRSNMHFTSSSTGGLSSSQSSYSPSNR. Phosphoserine occurs at positions 169, 189, and 212. Positions 175 to 191 are enriched in low complexity; it reads SSSTGGLSSSQSSYSPS. Positions 225 to 257 form a coiled coil; it reads SQLQQLQMQLQLERQHAQAARQQLETARNATRR. Positions 294–314 are disordered; it reads TRLNDPKMSETERQSMESERA. Over residues 297-314 the composition is skewed to basic and acidic residues; sequence NDPKMSETERQSMESERA. A phosphoserine mark is found at Ser335 and Ser336.

This sequence belongs to the KCMF1 family. As to quaternary structure, component of the SIFI complex, composed of KCMF1, UBR4 and calmodulin (CALM1, CALM2 or CALM3). Spleen, small intestine, ovary, peripheral blood, lung, kidney and pancreas. Expressed at low levels in the thymus, prostate, testis, colon, heart, brain, placenta and liver.

It is found in the cytoplasm. The protein resides in the late endosome. The protein localises to the lysosome. It catalyses the reaction S-ubiquitinyl-[E2 ubiquitin-conjugating enzyme]-L-cysteine + [acceptor protein]-L-lysine = [E2 ubiquitin-conjugating enzyme]-L-cysteine + N(6)-ubiquitinyl-[acceptor protein]-L-lysine.. The protein operates within protein modification; protein ubiquitination. E3 ubiquitin-protein ligase which accepts ubiquitin from an E2 ubiquitin-conjugating enzyme and then transfers it to targeted substrates, promoting their degradation by the proteasome. Together with UBR4, component of the N-end rule pathway: ubiquitinates proteins bearing specific N-terminal residues that are destabilizing according to the N-end rule, leading to their degradation. Does not ubiquitinate proteins that are acetylated at the N-terminus. Together with UBR4, part of a protein quality control pathway that catalyzes ubiquitination and degradation of proteins that have been oxidized in response to reactive oxygen species (ROS): recognizes proteins with an Arg-CysO3(H) degron at the N-terminus, and mediates assembly of heterotypic 'Lys-63'-/'Lys-27'-linked branched ubiquitin chains on oxidized proteins, leading to their degradation by autophagy. Catalytic component of the SIFI complex, a multiprotein complex required to inhibit the mitochondrial stress response after a specific stress event has been resolved: ubiquitinates and degrades (1) components of the HRI-mediated signaling of the integrated stress response, such as DELE1 and EIF2AK1/HRI, as well as (2) unimported mitochondrial precursors. Within the SIFI complex, UBR4 initiates ubiquitin chain that are further elongated or branched by KCMF1. The polypeptide is E3 ubiquitin-protein ligase KCMF1 (Homo sapiens (Human)).